The sequence spans 448 residues: uncharacterized protein (448 aa).

Lys-280 bears the N6-(pyridoxal phosphate)lysine mark.

Belongs to the class-III pyridoxal-phosphate-dependent aminotransferase family.

Its subcellular location is the cytoplasm. It is found in the mitochondrion. This is an uncharacterized protein from Schizosaccharomyces pombe (strain 972 / ATCC 24843) (Fission yeast).